The primary structure comprises 389 residues: Capsule polysaccharide export protein KpsS (389 aa).

The polypeptide is Capsule polysaccharide export protein KpsS (kpsS) (Escherichia coli).